The sequence spans 242 residues: Caffeoyl-CoA O-methyltransferase 2 (242 aa).

Residue Lys16 participates in substrate binding. S-adenosyl-L-methionine-binding positions include Thr58, Glu80, 82-83, Ser88, Asp106, and Ala135; that span reads GV. Asp158 serves as a coordination point for substrate. Residue Asp158 participates in a divalent metal cation binding. Asp160 is an S-adenosyl-L-methionine binding site. Asp184 and Asn185 together coordinate a divalent metal cation. Asn189 is a binding site for substrate.

The protein belongs to the class I-like SAM-binding methyltransferase superfamily. Cation-dependent O-methyltransferase family. CCoAMT subfamily. Mg(2+) is required as a cofactor. Mostly expressed in the bottom and middle parts of the stems.

It carries out the reaction (E)-caffeoyl-CoA + S-adenosyl-L-methionine = (E)-feruloyl-CoA + S-adenosyl-L-homocysteine + H(+). It functions in the pathway aromatic compound metabolism; phenylpropanoid biosynthesis. Methylates caffeoyl-CoA to feruloyl-CoA and 5-hydroxyferuloyl-CoA to sinapoyl-CoA. Plays a role in the synthesis of feruloylated polysaccharides. Involved in the reinforcement of the plant cell wall. Also involved in the responding to wounding or pathogen challenge by the increased formation of cell wall-bound ferulic acid polymers. Methylates 5-hydroxyferulolyl-CoA more efficiently than caffeoyl-CoA. This is Caffeoyl-CoA O-methyltransferase 2 (CCOAOMT2) from Nicotiana tabacum (Common tobacco).